The sequence spans 961 residues: SH3 domain-binding protein 4 (961 aa).

One can recognise an SH3 1 domain in the interval 55 to 114; the sequence is GNAKEVIAIKDYCPNNFTTLKFSKGDHLYVLDTSGGEWWYAHNTTEMGYIPSSYVQPLNY. Phosphoserine is present on residues Ser-131, Ser-244, Ser-249, Ser-277, and Ser-294. Residues 315–452 enclose the ZU5 domain; sequence TNIVCKLDSS…LEPCMYLAIV (138 aa). A Phosphoserine modification is found at Ser-635. The SH3 2 domain maps to 652–722; that stretch reads SSLKFGKLLK…HTKNVLVVGK (71 aa).

In terms of assembly, homodimer or homooligomer. Interacts with DNM2, EPS15, clathrin, the adapter protein complex 2/AP-2 and TFRC. Interacts with the Rag GTPases RRAGA, RRAGB, RRAGC and RRAGD; the interaction is most probably direct, preferentially occurs with their inactive GDP-bound form and is negatively regulated by amino acids. Phosphorylated upon EGF stimulation. Phosphorylation prevents interaction with DNM2.

It is found in the membrane. It localises to the clathrin-coated pit. The protein resides in the cytoplasmic vesicle. The protein localises to the clathrin-coated vesicle. Its subcellular location is the nucleus. May function in transferrin receptor internalization at the plasma membrane through a cargo-specific control of clathrin-mediated endocytosis. Alternatively, may act as a negative regulator of the amino acid-induced TOR signaling by inhibiting the formation of active Rag GTPase complexes. Preferentially binds inactive Rag GTPase complexes and prevents their interaction with the mTORC1 complex inhibiting its relocalization to lysosomes and its activation. Thereby, may indirectly regulate cell growth, proliferation and autophagy. This chain is SH3 domain-binding protein 4 (Sh3bp4), found in Rattus norvegicus (Rat).